Here is a 54-residue protein sequence, read N- to C-terminus: UPF0391 membrane protein Pfl01_0044 (54 aa).

2 helical membrane passes run 4–24 (WAIT…GGIA) and 29–49 (GIAK…FFFG).

The protein belongs to the UPF0391 family.

It localises to the cell membrane. The protein is UPF0391 membrane protein Pfl01_0044 of Pseudomonas fluorescens (strain Pf0-1).